A 450-amino-acid polypeptide reads, in one-letter code: Bifunctional protein GlmU (450 aa).

A pyrophosphorylase region spans residues 1–226; the sequence is MLAVAVLAAG…ADEVNGINNR (226 aa). Residues 7-10, Lys21, Gln73, and 78-79 each bind UDP-N-acetyl-alpha-D-glucosamine; these read LAAG and GT. A Mg(2+)-binding site is contributed by Asp103. UDP-N-acetyl-alpha-D-glucosamine-binding residues include Gly140, Glu155, Asn170, and Asn224. Asn224 serves as a coordination point for Mg(2+). Residues 227-247 form a linker region; sequence RQLAQCEALLQQRLRHHWMDE. The segment at 248–450 is N-acetyltransferase; that stretch reads GVTFIDPESC…TKEGWAERKV (203 aa). 2 residues coordinate UDP-N-acetyl-alpha-D-glucosamine: Arg329 and Lys347. The active-site Proton acceptor is the His359. Residues Tyr362 and Asn373 each coordinate UDP-N-acetyl-alpha-D-glucosamine. Acetyl-CoA is bound by residues Ala376, 382–383, Ala419, and Arg436; that span reads NY.

The protein in the N-terminal section; belongs to the N-acetylglucosamine-1-phosphate uridyltransferase family. This sequence in the C-terminal section; belongs to the transferase hexapeptide repeat family. As to quaternary structure, homotrimer. The cofactor is Mg(2+).

It localises to the cytoplasm. The enzyme catalyses alpha-D-glucosamine 1-phosphate + acetyl-CoA = N-acetyl-alpha-D-glucosamine 1-phosphate + CoA + H(+). It catalyses the reaction N-acetyl-alpha-D-glucosamine 1-phosphate + UTP + H(+) = UDP-N-acetyl-alpha-D-glucosamine + diphosphate. It functions in the pathway nucleotide-sugar biosynthesis; UDP-N-acetyl-alpha-D-glucosamine biosynthesis; N-acetyl-alpha-D-glucosamine 1-phosphate from alpha-D-glucosamine 6-phosphate (route II): step 2/2. Its pathway is nucleotide-sugar biosynthesis; UDP-N-acetyl-alpha-D-glucosamine biosynthesis; UDP-N-acetyl-alpha-D-glucosamine from N-acetyl-alpha-D-glucosamine 1-phosphate: step 1/1. The protein operates within bacterial outer membrane biogenesis; LPS lipid A biosynthesis. Catalyzes the last two sequential reactions in the de novo biosynthetic pathway for UDP-N-acetylglucosamine (UDP-GlcNAc). The C-terminal domain catalyzes the transfer of acetyl group from acetyl coenzyme A to glucosamine-1-phosphate (GlcN-1-P) to produce N-acetylglucosamine-1-phosphate (GlcNAc-1-P), which is converted into UDP-GlcNAc by the transfer of uridine 5-monophosphate (from uridine 5-triphosphate), a reaction catalyzed by the N-terminal domain. This is Bifunctional protein GlmU from Synechococcus sp. (strain CC9605).